The chain runs to 183 residues: Large ribosomal subunit protein uL6 (183 aa).

This sequence belongs to the universal ribosomal protein uL6 family. Part of the 50S ribosomal subunit.

Its function is as follows. This protein binds to the 23S rRNA, and is important in its secondary structure. It is located near the subunit interface in the base of the L7/L12 stalk, and near the tRNA binding site of the peptidyltransferase center. The polypeptide is Large ribosomal subunit protein uL6 (Chlamydia felis (strain Fe/C-56) (Chlamydophila felis)).